The sequence spans 1056 residues: Carbamoyl phosphate synthase large chain (1056 aa).

The carboxyphosphate synthetic domain stretch occupies residues 1 to 398; sequence MPRDPSIKKV…AFLKALRSLD (398 aa). 12 residues coordinate ATP: Arg-127, Arg-167, Gly-173, Gly-174, Glu-206, Val-208, Glu-213, Gly-239, Val-240, His-241, Gln-282, and Glu-295. The ATP-grasp 1 domain maps to 131–324; the sequence is RDLMNRIGEP…IARVASKIAI (194 aa). Mg(2+)-binding residues include Gln-282, Glu-295, and Asn-297. Residues Gln-282, Glu-295, and Asn-297 each coordinate Mn(2+). The tract at residues 399 to 532 is oligomerization domain; sequence TDVEHHTVLS…STYGDKVCEV (134 aa). The tract at residues 533–921 is carbamoyl phosphate synthetic domain; the sequence is THSDRKKVMI…YKASIAAHNR (389 aa). Positions 663–854 constitute an ATP-grasp 2 domain; the sequence is SVLLDSLSIP…LAKIAARVMM (192 aa). ATP contacts are provided by Arg-699, Arg-738, Leu-740, Glu-745, Gly-770, Val-771, His-772, Ser-773, Gln-813, and Glu-825. Positions 813, 825, and 827 each coordinate Mg(2+). Residues Gln-813, Glu-825, and Asn-827 each contribute to the Mn(2+) site. The 137-residue stretch at 920–1056 folds into the MGS-like domain; it reads NRLPKSGNVF…IEPLQHYIGR (137 aa). Residues 922-1056 form an allosteric domain region; it reads LPKSGNVFIS…IEPLQHYIGR (135 aa).

Belongs to the CarB family. Composed of two chains; the small (or glutamine) chain promotes the hydrolysis of glutamine to ammonia, which is used by the large (or ammonia) chain to synthesize carbamoyl phosphate. Tetramer of heterodimers (alpha,beta)4. Mg(2+) is required as a cofactor. The cofactor is Mn(2+).

The enzyme catalyses hydrogencarbonate + L-glutamine + 2 ATP + H2O = carbamoyl phosphate + L-glutamate + 2 ADP + phosphate + 2 H(+). The catalysed reaction is hydrogencarbonate + NH4(+) + 2 ATP = carbamoyl phosphate + 2 ADP + phosphate + 2 H(+). It functions in the pathway amino-acid biosynthesis; L-arginine biosynthesis; carbamoyl phosphate from bicarbonate: step 1/1. Its pathway is pyrimidine metabolism; UMP biosynthesis via de novo pathway; (S)-dihydroorotate from bicarbonate: step 1/3. Functionally, large subunit of the glutamine-dependent carbamoyl phosphate synthetase (CPSase). CPSase catalyzes the formation of carbamoyl phosphate from the ammonia moiety of glutamine, carbonate, and phosphate donated by ATP, constituting the first step of 2 biosynthetic pathways, one leading to arginine and/or urea and the other to pyrimidine nucleotides. The large subunit (synthetase) binds the substrates ammonia (free or transferred from glutamine from the small subunit), hydrogencarbonate and ATP and carries out an ATP-coupled ligase reaction, activating hydrogencarbonate by forming carboxy phosphate which reacts with ammonia to form carbamoyl phosphate. In Methanospirillum hungatei JF-1 (strain ATCC 27890 / DSM 864 / NBRC 100397 / JF-1), this protein is Carbamoyl phosphate synthase large chain.